Consider the following 546-residue polypeptide: Phosphomethylpyrimidine synthase (546 aa).

Positions 1–19 are enriched in polar residues; that stretch reads MSTPSSRSQAPETVTTGPI. The interval 1–20 is disordered; it reads MSTPSSRSQAPETVTTGPIQ. Residues asparagine 146, methionine 175, tyrosine 204, histidine 240, 260–262, 301–304, and glutamate 340 each bind substrate; these read SRG and DGLR. Histidine 344 serves as a coordination point for Zn(2+). Tyrosine 367 provides a ligand contact to substrate. Histidine 408 is a binding site for Zn(2+). Positions 488, 491, and 496 each coordinate [4Fe-4S] cluster.

The protein belongs to the ThiC family. [4Fe-4S] cluster serves as cofactor.

It carries out the reaction 5-amino-1-(5-phospho-beta-D-ribosyl)imidazole + S-adenosyl-L-methionine = 4-amino-2-methyl-5-(phosphooxymethyl)pyrimidine + CO + 5'-deoxyadenosine + formate + L-methionine + 3 H(+). Its pathway is cofactor biosynthesis; thiamine diphosphate biosynthesis. Functionally, catalyzes the synthesis of the hydroxymethylpyrimidine phosphate (HMP-P) moiety of thiamine from aminoimidazole ribotide (AIR) in a radical S-adenosyl-L-methionine (SAM)-dependent reaction. This Mycobacteroides abscessus (strain ATCC 19977 / DSM 44196 / CCUG 20993 / CIP 104536 / JCM 13569 / NCTC 13031 / TMC 1543 / L948) (Mycobacterium abscessus) protein is Phosphomethylpyrimidine synthase.